The sequence spans 465 residues: Hexokinase-4 (465 aa).

The Hexokinase domain maps to 10–454 (ATKKEKVEQI…SGRGAALVSA (445 aa)). A hexokinase small subdomain region spans residues 67–203 (EGSEVGDFLS…DFEMDVVAMV (137 aa)). Residue 78-83 (DLGGTN) coordinates ATP. Substrate contacts are provided by residues 151–152 (SF), 168–169 (TK), and 204–205 (ND). Residues 204–443 (NDTVATMISC…CEITFIESEE (240 aa)) are hexokinase large subdomain. T228 is a binding site for ATP. N231, E256, and E290 together coordinate substrate. Residues 295-296 (GK), 332-336 (TRFVS), and 411-415 (SVYKL) each bind ATP.

Belongs to the hexokinase family. As to quaternary structure, monomer. Interacts with MIDN; the interaction occurs preferentially at low glucose levels and results in inhibition of hexokinase activity. Interacts with GCKR; leading to sequestration in the nucleus. Expression is restricted to the liver and pancreatic islets (at protein level).

Its subcellular location is the cytoplasm. The protein localises to the nucleus. The protein resides in the mitochondrion. It carries out the reaction a D-hexose + ATP = a D-hexose 6-phosphate + ADP + H(+). It catalyses the reaction D-fructose + ATP = D-fructose 6-phosphate + ADP + H(+). The catalysed reaction is D-glucose + ATP = D-glucose 6-phosphate + ADP + H(+). The enzyme catalyses D-mannose + ATP = D-mannose 6-phosphate + ADP + H(+). It participates in carbohydrate metabolism; hexose metabolism. Its pathway is carbohydrate degradation; glycolysis; D-glyceraldehyde 3-phosphate and glycerone phosphate from D-glucose: step 1/4. With respect to regulation, subject to allosteric regulation. Low glucose and high fructose-6-phosphate triggers association with the inhibitor GCKR followed by sequestration in the nucleus. Catalyzes the phosphorylation of hexose, such as D-glucose, D-fructose and D-mannose, to hexose 6-phosphate (D-glucose 6-phosphate, D-fructose 6-phosphate and D-mannose 6-phosphate, respectively). Compared to other hexokinases, has a weak affinity for D-glucose, and is effective only when glucose is abundant. Mainly expressed in pancreatic beta cells and the liver and constitutes a rate-limiting step in glucose metabolism in these tissues. Since insulin secretion parallels glucose metabolism and the low glucose affinity of GCK ensures that it can change its enzymatic activity within the physiological range of glucose concentrations, GCK acts as a glucose sensor in the pancreatic beta cell. In pancreas, plays an important role in modulating insulin secretion. In liver, helps to facilitate the uptake and conversion of glucose by acting as an insulin-sensitive determinant of hepatic glucose usage. Required to provide D-glucose 6-phosphate for the synthesis of glycogen. Mediates the initial step of glycolysis by catalyzing phosphorylation of D-glucose to D-glucose 6-phosphate. This Rattus norvegicus (Rat) protein is Hexokinase-4.